Reading from the N-terminus, the 382-residue chain is Flap endonuclease 1 (382 aa).

An N-domain region spans residues 1 to 105 (MGIKGLNAII…HELTKRSSRR (105 aa)). Aspartate 34 contacts Mg(2+). 2 residues coordinate DNA: arginine 47 and arginine 71. Aspartate 87, glutamate 156, glutamate 158, aspartate 177, and aspartate 179 together coordinate Mg(2+). The segment at 120–251 (EKMKQERRLV…VTALKLIKTH (132 aa)) is I-domain. Glutamate 156 provides a ligand contact to DNA. Positions 229 and 231 each coordinate DNA. Mg(2+) is bound at residue aspartate 231. Residues 339–347 (IQGRLDGFF) form an interaction with PCNA region. The tract at residues 358-382 (AAAAKRAQENKKLNKNKNKVTKGRR) is disordered. Basic residues predominate over residues 370-382 (LNKNKNKVTKGRR).

This sequence belongs to the XPG/RAD2 endonuclease family. FEN1 subfamily. As to quaternary structure, interacts with PCNA. Three molecules of RAD27 bind to one PCNA trimer with each molecule binding to one PCNA monomer. PCNA stimulates the nuclease activity without altering cleavage specificity. Mg(2+) serves as cofactor. In terms of processing, phosphorylated. Phosphorylation upon DNA damage induces relocalization to the nuclear plasma.

Its subcellular location is the nucleus. The protein resides in the nucleolus. It localises to the nucleoplasm. The protein localises to the mitochondrion. In terms of biological role, structure-specific nuclease with 5'-flap endonuclease and 5'-3' exonuclease activities involved in DNA replication and repair. During DNA replication, cleaves the 5'-overhanging flap structure that is generated by displacement synthesis when DNA polymerase encounters the 5'-end of a downstream Okazaki fragment. It enters the flap from the 5'-end and then tracks to cleave the flap base, leaving a nick for ligation. Also involved in the long patch base excision repair (LP-BER) pathway, by cleaving within the apurinic/apyrimidinic (AP) site-terminated flap. Acts as a genome stabilization factor that prevents flaps from equilibrating into structures that lead to duplications and deletions. Also possesses 5'-3' exonuclease activity on nicked or gapped double-stranded DNA, and exhibits RNase H activity. Also involved in replication and repair of rDNA and in repairing mitochondrial DNA. The chain is Flap endonuclease 1 from Saccharomyces cerevisiae (strain YJM789) (Baker's yeast).